The chain runs to 218 residues: Adenylate kinase (218 aa).

Residue 10-15 (GAGKGT) coordinates ATP. An NMP region spans residues 30–59 (STGDMLRAAVKAGTPLGLEAKKVMDAGGLV). AMP-binding positions include Thr-31, Arg-36, 57–59 (GLV), 85–88 (GFPR), and Gln-92. An LID region spans residues 122–159 (ERRVHPASGRSYHVRFNPPKAEGVDDVTGEPLVQRDDD). ATP contacts are provided by residues Arg-123 and 132-133 (SY). Residues Arg-156 and Arg-167 each coordinate AMP. Gly-203 contributes to the ATP binding site.

This sequence belongs to the adenylate kinase family. As to quaternary structure, monomer.

The protein resides in the cytoplasm. The enzyme catalyses AMP + ATP = 2 ADP. It functions in the pathway purine metabolism; AMP biosynthesis via salvage pathway; AMP from ADP: step 1/1. In terms of biological role, catalyzes the reversible transfer of the terminal phosphate group between ATP and AMP. Plays an important role in cellular energy homeostasis and in adenine nucleotide metabolism. The chain is Adenylate kinase from Bordetella pertussis (strain Tohama I / ATCC BAA-589 / NCTC 13251).